Reading from the N-terminus, the 294-residue chain is Beta-lactamase (294 aa).

The signal sequence occupies residues 1–27 (MFKKRGRQTVLIAAVLAFFTASSPLLA). The Acyl-ester intermediate role is filled by Ser-76. Glu-174 functions as the Proton acceptor in the catalytic mechanism. Position 240-242 (240-242 (KTG)) interacts with substrate.

The protein belongs to the class-A beta-lactamase family.

The catalysed reaction is a beta-lactam + H2O = a substituted beta-amino acid. The chain is Beta-lactamase from Citrobacter koseri (Citrobacter diversus).